A 361-amino-acid polypeptide reads, in one-letter code: Phosphoserine aminotransferase (361 aa).

Arginine 42 serves as a coordination point for L-glutamate. Pyridoxal 5'-phosphate contacts are provided by residues 76–77, tryptophan 102, threonine 152, aspartate 172, and glutamine 195; that span reads AT. An N6-(pyridoxal phosphate)lysine modification is found at lysine 196. A pyridoxal 5'-phosphate-binding site is contributed by 237 to 238; that stretch reads NT.

The protein belongs to the class-V pyridoxal-phosphate-dependent aminotransferase family. SerC subfamily. As to quaternary structure, homodimer. The cofactor is pyridoxal 5'-phosphate.

It is found in the cytoplasm. The enzyme catalyses O-phospho-L-serine + 2-oxoglutarate = 3-phosphooxypyruvate + L-glutamate. The catalysed reaction is 4-(phosphooxy)-L-threonine + 2-oxoglutarate = (R)-3-hydroxy-2-oxo-4-phosphooxybutanoate + L-glutamate. It participates in amino-acid biosynthesis; L-serine biosynthesis; L-serine from 3-phospho-D-glycerate: step 2/3. It functions in the pathway cofactor biosynthesis; pyridoxine 5'-phosphate biosynthesis; pyridoxine 5'-phosphate from D-erythrose 4-phosphate: step 3/5. Its function is as follows. Catalyzes the reversible conversion of 3-phosphohydroxypyruvate to phosphoserine and of 3-hydroxy-2-oxo-4-phosphonooxybutanoate to phosphohydroxythreonine. The chain is Phosphoserine aminotransferase from Xanthomonas oryzae pv. oryzae (strain MAFF 311018).